The following is a 735-amino-acid chain: Putative RNA polymerase II subunit B1 CTD phosphatase RPAP2 homolog (735 aa).

The RTR1-type zinc finger occupies alanine 33–aspartate 118. Residues cysteine 56, cysteine 61, cysteine 94, and cysteine 98 each contribute to the Zn(2+) site. Disordered stretches follow at residues valine 179–histidine 201, glycine 349–lysine 374, and glutamate 519–lysine 538. The span at glycine 349 to glycine 364 shows a compositional bias: low complexity. Acidic residues predominate over residues glutamate 519–proline 530.

It belongs to the RPAP2 family.

It localises to the nucleus. It catalyses the reaction O-phospho-L-seryl-[protein] + H2O = L-seryl-[protein] + phosphate. It carries out the reaction O-phospho-L-threonyl-[protein] + H2O = L-threonyl-[protein] + phosphate. Putative RNA polymerase II subunit B1 C-terminal domain (CTD) phosphatase involved in RNA polymerase II transcription regulation. The protein is Putative RNA polymerase II subunit B1 CTD phosphatase RPAP2 homolog of Arabidopsis thaliana (Mouse-ear cress).